The chain runs to 150 residues: MSDSVEIFTDGACKGNPGPGGWGALLVCKGVEKELWGGEANTTNNRMELMAAIRGLEELKRQCDVQLVTDSQYVMKGINEWMANWKKRGWKTAAKEPVKNADLWQQLDEQVNRHNVTWKWVRGHTGHHGNERADQLANRGVDEVRGYKQP.

An RNase H type-1 domain is found at M1–D142. Positions 10, 48, 70, and 134 each coordinate Mg(2+).

Belongs to the RNase H family. As to quaternary structure, monomer. It depends on Mg(2+) as a cofactor.

Its subcellular location is the cytoplasm. The catalysed reaction is Endonucleolytic cleavage to 5'-phosphomonoester.. Functionally, endonuclease that specifically degrades the RNA of RNA-DNA hybrids. This is Ribonuclease H from Pseudomonas fluorescens (strain ATCC BAA-477 / NRRL B-23932 / Pf-5).